Consider the following 69-residue polypeptide: ATP synthase F(0) complex subunit e, mitochondrial (69 aa).

Residue K34 is modified to N6-acetyllysine.

The protein belongs to the ATPase e subunit family. Component of the ATP synthase complex composed at least of ATP5F1A/subunit alpha, ATP5F1B/subunit beta, ATP5MC1/subunit c (homooctomer), MT-ATP6/subunit a, MT-ATP8/subunit 8, ATP5ME/subunit e, ATP5MF/subunit f, ATP5MG/subunit g, ATP5MK/subunit k, ATP5MJ/subunit j, ATP5F1C/subunit gamma, ATP5F1D/subunit delta, ATP5F1E/subunit epsilon, ATP5PF/subunit F6, ATP5PB/subunit b, ATP5PD/subunit d, ATP5PO/subunit OSCP. ATP synthase complex consists of a soluble F(1) head domain (subunits alpha(3) and beta(3)) - the catalytic core - and a membrane F(0) domain - the membrane proton channel (subunits c, a, 8, e, f, g, k and j). These two domains are linked by a central stalk (subunits gamma, delta, and epsilon) rotating inside the F1 region and a stationary peripheral stalk (subunits F6, b, d, and OSCP).

It localises to the mitochondrion. It is found in the mitochondrion inner membrane. Subunit e, of the mitochondrial membrane ATP synthase complex (F(1)F(0) ATP synthase or Complex V) that produces ATP from ADP in the presence of a proton gradient across the membrane which is generated by electron transport complexes of the respiratory chain. ATP synthase complex consist of a soluble F(1) head domain - the catalytic core - and a membrane F(1) domain - the membrane proton channel. These two domains are linked by a central stalk rotating inside the F(1) region and a stationary peripheral stalk. During catalysis, ATP synthesis in the catalytic domain of F(1) is coupled via a rotary mechanism of the central stalk subunits to proton translocation. In vivo, can only synthesize ATP although its ATP hydrolase activity can be activated artificially in vitro. Part of the complex F(0) domain. This chain is ATP synthase F(0) complex subunit e, mitochondrial, found in Cricetulus longicaudatus (Long-tailed dwarf hamster).